The chain runs to 587 residues: Sulfite reductase [NADPH] hemoprotein beta-component (587 aa).

The span at Met-1–Pro-13 shows a compositional bias: polar residues. The interval Met-1–Gln-20 is disordered. Cys-439, Cys-445, Cys-484, and Cys-488 together coordinate [4Fe-4S] cluster. Residue Cys-488 participates in siroheme binding.

This sequence belongs to the nitrite and sulfite reductase 4Fe-4S domain family. Alpha(8)-beta(8). The alpha component is a flavoprotein, the beta component is a hemoprotein. Requires siroheme as cofactor. It depends on [4Fe-4S] cluster as a cofactor.

The catalysed reaction is hydrogen sulfide + 3 NADP(+) + 3 H2O = sulfite + 3 NADPH + 4 H(+). Its pathway is sulfur metabolism; hydrogen sulfide biosynthesis; hydrogen sulfide from sulfite (NADPH route): step 1/1. Its function is as follows. Component of the sulfite reductase complex that catalyzes the 6-electron reduction of sulfite to sulfide. This is one of several activities required for the biosynthesis of L-cysteine from sulfate. In Bordetella petrii (strain ATCC BAA-461 / DSM 12804 / CCUG 43448), this protein is Sulfite reductase [NADPH] hemoprotein beta-component.